The primary structure comprises 105 residues: Nucleoid-associated protein TTHA1599 (105 aa).

The protein belongs to the YbaB/EbfC family. As to quaternary structure, homodimer.

The protein resides in the cytoplasm. It is found in the nucleoid. Binds to DNA and alters its conformation. May be involved in regulation of gene expression, nucleoid organization and DNA protection. The polypeptide is Nucleoid-associated protein TTHA1599 (Thermus thermophilus (strain ATCC 27634 / DSM 579 / HB8)).